Reading from the N-terminus, the 159-residue chain is CASP-like protein 1C1 (159 aa).

Residues 1–6 (MAKIKR) lie on the Cytoplasmic side of the membrane. The chain crosses the membrane as a helical span at residues 7-27 (IITTLVRLLVLGAALSATIVM). Residues 28–50 (VTSHDSAEVLNLSFDAKYTNARA) are Extracellular-facing. Asparagine 38 carries N-linked (GlcNAc...) asparagine glycosylation. A helical membrane pass occupies residues 51–73 (FVYFAITNAIASGYSFIALFLSF). Over 74 to 86 (STPLWHLVFLLDV) the chain is Cytoplasmic. The helical transmembrane segment at 87 to 107 (FMTLLLTSSISVALAIADVGK) threads the bilayer. At 108–130 (KGNSHAGWLPVCGQVPEFCDHVT) the chain is on the extracellular side. A helical transmembrane segment spans residues 131 to 151 (GALIAGFSAAVLYLVLLLFSI). Residues 152-159 (HAVLNPKP) lie on the Cytoplasmic side of the membrane.

This sequence belongs to the Casparian strip membrane proteins (CASP) family. Homodimer and heterodimers.

It is found in the cell membrane. The protein is CASP-like protein 1C1 of Vitis vinifera (Grape).